We begin with the raw amino-acid sequence, 602 residues long: DNA mismatch repair protein MutL (602 aa).

This sequence belongs to the DNA mismatch repair MutL/HexB family.

This protein is involved in the repair of mismatches in DNA. It is required for dam-dependent methyl-directed DNA mismatch repair. May act as a 'molecular matchmaker', a protein that promotes the formation of a stable complex between two or more DNA-binding proteins in an ATP-dependent manner without itself being part of a final effector complex. This chain is DNA mismatch repair protein MutL, found in Baumannia cicadellinicola subsp. Homalodisca coagulata.